A 447-amino-acid polypeptide reads, in one-letter code: Na(+)-translocating NADH-quinone reductase subunit A (447 aa).

It belongs to the NqrA family. Composed of six subunits; NqrA, NqrB, NqrC, NqrD, NqrE and NqrF.

The enzyme catalyses a ubiquinone + n Na(+)(in) + NADH + H(+) = a ubiquinol + n Na(+)(out) + NAD(+). Functionally, NQR complex catalyzes the reduction of ubiquinone-1 to ubiquinol by two successive reactions, coupled with the transport of Na(+) ions from the cytoplasm to the periplasm. NqrA to NqrE are probably involved in the second step, the conversion of ubisemiquinone to ubiquinol. This is Na(+)-translocating NADH-quinone reductase subunit A from Neisseria meningitidis serogroup A / serotype 4A (strain DSM 15465 / Z2491).